The chain runs to 389 residues: Phospho-N-acetylmuramoyl-pentapeptide-transferase (389 aa).

Transmembrane regions (helical) follow at residues 25 to 45 (RAVM…PWVI), 73 to 93 (TMGG…WADL), 97 to 117 (FIWI…VDDY), 135 to 155 (FWQT…VSEI), 190 to 210 (VSYP…IVGS), 222 to 242 (GLVI…AYVM), 258 to 278 (GAGE…AFLW), 286 to 306 (VFMG…IAVI), 311 to 331 (IVLF…MMQV), and 366 to 386 (QVVV…LSSL).

This sequence belongs to the glycosyltransferase 4 family. MraY subfamily. Requires Mg(2+) as cofactor.

The protein localises to the cell inner membrane. It catalyses the reaction UDP-N-acetyl-alpha-D-muramoyl-L-alanyl-gamma-D-glutamyl-meso-2,6-diaminopimeloyl-D-alanyl-D-alanine + di-trans,octa-cis-undecaprenyl phosphate = di-trans,octa-cis-undecaprenyl diphospho-N-acetyl-alpha-D-muramoyl-L-alanyl-D-glutamyl-meso-2,6-diaminopimeloyl-D-alanyl-D-alanine + UMP. It participates in cell wall biogenesis; peptidoglycan biosynthesis. Functionally, catalyzes the initial step of the lipid cycle reactions in the biosynthesis of the cell wall peptidoglycan: transfers peptidoglycan precursor phospho-MurNAc-pentapeptide from UDP-MurNAc-pentapeptide onto the lipid carrier undecaprenyl phosphate, yielding undecaprenyl-pyrophosphoryl-MurNAc-pentapeptide, known as lipid I. The sequence is that of Phospho-N-acetylmuramoyl-pentapeptide-transferase from Polynucleobacter asymbioticus (strain DSM 18221 / CIP 109841 / QLW-P1DMWA-1) (Polynucleobacter necessarius subsp. asymbioticus).